The primary structure comprises 393 residues: Tryptophan synthase beta chain (393 aa).

N6-(pyridoxal phosphate)lysine is present on Lys-85.

The protein belongs to the TrpB family. Tetramer of two alpha and two beta chains. It depends on pyridoxal 5'-phosphate as a cofactor.

It catalyses the reaction (1S,2R)-1-C-(indol-3-yl)glycerol 3-phosphate + L-serine = D-glyceraldehyde 3-phosphate + L-tryptophan + H2O. It functions in the pathway amino-acid biosynthesis; L-tryptophan biosynthesis; L-tryptophan from chorismate: step 5/5. In terms of biological role, the beta subunit is responsible for the synthesis of L-tryptophan from indole and L-serine. The chain is Tryptophan synthase beta chain (trpB) from Helicobacter pylori (strain ATCC 700392 / 26695) (Campylobacter pylori).